The chain runs to 393 residues: Arginine biosynthesis bifunctional protein ArgJ (393 aa).

Substrate-binding residues include Thr145, Lys171, Thr182, Glu265, Asn388, and Ser393. The Nucleophile role is filled by Thr182.

It belongs to the ArgJ family. In terms of assembly, heterotetramer of two alpha and two beta chains.

The protein resides in the cytoplasm. The enzyme catalyses N(2)-acetyl-L-ornithine + L-glutamate = N-acetyl-L-glutamate + L-ornithine. The catalysed reaction is L-glutamate + acetyl-CoA = N-acetyl-L-glutamate + CoA + H(+). It functions in the pathway amino-acid biosynthesis; L-arginine biosynthesis; L-ornithine and N-acetyl-L-glutamate from L-glutamate and N(2)-acetyl-L-ornithine (cyclic): step 1/1. Its pathway is amino-acid biosynthesis; L-arginine biosynthesis; N(2)-acetyl-L-ornithine from L-glutamate: step 1/4. Catalyzes two activities which are involved in the cyclic version of arginine biosynthesis: the synthesis of N-acetylglutamate from glutamate and acetyl-CoA as the acetyl donor, and of ornithine by transacetylation between N(2)-acetylornithine and glutamate. This chain is Arginine biosynthesis bifunctional protein ArgJ, found in Nitratidesulfovibrio vulgaris (strain ATCC 29579 / DSM 644 / CCUG 34227 / NCIMB 8303 / VKM B-1760 / Hildenborough) (Desulfovibrio vulgaris).